The following is a 387-amino-acid chain: MATTKSFLILSVMILATTSSTFASLEEMVTVLSIDGGGIKGIIPGTILEFLEGQLQKMDNNADARLADYFDVIGGTSTGGLLTAMITTPNENNRPFAAANEIVPFYFEHGPHIFNSSTGQFFGPKYDGKYLMQVLQEKLGETRVHQALTEVAISSFDIKTNKPVIFTKSNLAKSPELDAKMYDICYSTAAAPTYFPPHYFATNTINGDKYEFNLVDGAVATVADPALLSVSVATRRAQEDPAFASIRSLNYKKMLLLSLGTGTTSEFDKTHTAEETAKWGALQWMLVIQQMTEAASSYMTDYYLSTVFQDLHSQNNYLRVQENALTGTTTKADDASEANMELLAQVGENLLKKPVSKDNPETYEEALKRFAKLLSDRKKLRANKASY.

An N-terminal signal peptide occupies residues 1–23; the sequence is MATTKSFLILSVMILATTSSTFA. Residues 32 to 230 enclose the PNPLA domain; the sequence is LSIDGGGIKG…TVADPALLSV (199 aa). Residues 36 to 41 carry the GXGXXG motif; that stretch reads GGGIKG. The short motif at 75 to 79 is the GXSXG element; that stretch reads GTSTG. Serine 77 (nucleophile) is an active-site residue. Asparagine 115 carries N-linked (GlcNAc...) asparagine glycosylation. Aspartate 216 functions as the Proton acceptor in the catalytic mechanism. The DGA/G motif lies at 216-218; that stretch reads DGA. The stretch at 361-385 forms a coiled coil; the sequence is ETYEEALKRFAKLLSDRKKLRANKA.

Belongs to the patatin family. In terms of tissue distribution, tuber.

The protein localises to the vacuole. Probable lipolytic acyl hydrolase (LAH), an activity which is thought to be involved in the response of tubers to pathogens. This is Patatin-01 from Solanum tuberosum (Potato).